Here is a 374-residue protein sequence, read N- to C-terminus: Queuine tRNA-ribosyltransferase (374 aa).

Asp-95 acts as the Proton acceptor in catalysis. Substrate is bound by residues 95–99 (DSGGF), Asp-149, Gln-191, and Gly-218. An RNA binding region spans residues 249–255 (GVGTYRE). The active-site Nucleophile is Asp-268. Residues 273-277 (TRWAR) form an RNA binding; important for wobble base 34 recognition region. Zn(2+)-binding residues include Cys-306, Cys-308, Cys-311, and His-337.

It belongs to the queuine tRNA-ribosyltransferase family. In terms of assembly, homodimer. Within each dimer, one monomer is responsible for RNA recognition and catalysis, while the other monomer binds to the replacement base PreQ1. Zn(2+) serves as cofactor.

The enzyme catalyses 7-aminomethyl-7-carbaguanine + guanosine(34) in tRNA = 7-aminomethyl-7-carbaguanosine(34) in tRNA + guanine. It functions in the pathway tRNA modification; tRNA-queuosine biosynthesis. Its function is as follows. Catalyzes the base-exchange of a guanine (G) residue with the queuine precursor 7-aminomethyl-7-deazaguanine (PreQ1) at position 34 (anticodon wobble position) in tRNAs with GU(N) anticodons (tRNA-Asp, -Asn, -His and -Tyr). Catalysis occurs through a double-displacement mechanism. The nucleophile active site attacks the C1' of nucleotide 34 to detach the guanine base from the RNA, forming a covalent enzyme-RNA intermediate. The proton acceptor active site deprotonates the incoming PreQ1, allowing a nucleophilic attack on the C1' of the ribose to form the product. After dissociation, two additional enzymatic reactions on the tRNA convert PreQ1 to queuine (Q), resulting in the hypermodified nucleoside queuosine (7-(((4,5-cis-dihydroxy-2-cyclopenten-1-yl)amino)methyl)-7-deazaguanosine). The chain is Queuine tRNA-ribosyltransferase from Nostoc sp. (strain PCC 7120 / SAG 25.82 / UTEX 2576).